The chain runs to 133 residues: Small ribosomal subunit protein uS9 (133 aa).

A disordered region spans residues 102-133 (KPKGLLTRDPREVERKKYGLKKARRAPQFSKR). Residues 107-118 (LTRDPREVERKK) show a composition bias toward basic and acidic residues. The span at 119 to 133 (YGLKKARRAPQFSKR) shows a compositional bias: basic residues.

Belongs to the universal ribosomal protein uS9 family.

The polypeptide is Small ribosomal subunit protein uS9 (Deinococcus deserti (strain DSM 17065 / CIP 109153 / LMG 22923 / VCD115)).